A 440-amino-acid chain; its full sequence is NADH-quinone oxidoreductase subunit D 1 (440 aa).

Belongs to the complex I 49 kDa subunit family. In terms of assembly, NDH-1 is composed of 14 different subunits. Subunits NuoB, C, D, E, F, and G constitute the peripheral sector of the complex.

It localises to the cell inner membrane. The enzyme catalyses a quinone + NADH + 5 H(+)(in) = a quinol + NAD(+) + 4 H(+)(out). Its function is as follows. NDH-1 shuttles electrons from NADH, via FMN and iron-sulfur (Fe-S) centers, to quinones in the respiratory chain. The immediate electron acceptor for the enzyme in this species is believed to be a menaquinone. Couples the redox reaction to proton translocation (for every two electrons transferred, four hydrogen ions are translocated across the cytoplasmic membrane), and thus conserves the redox energy in a proton gradient. In Chloroherpeton thalassium (strain ATCC 35110 / GB-78), this protein is NADH-quinone oxidoreductase subunit D 1.